The sequence spans 490 residues: Glutamyl-tRNA(Gln) amidotransferase subunit A (490 aa).

Residues Lys78 and Ser159 each act as charge relay system in the active site. Catalysis depends on Ser183, which acts as the Acyl-ester intermediate.

This sequence belongs to the amidase family. GatA subfamily. Heterotrimer of A, B and C subunits.

The catalysed reaction is L-glutamyl-tRNA(Gln) + L-glutamine + ATP + H2O = L-glutaminyl-tRNA(Gln) + L-glutamate + ADP + phosphate + H(+). Functionally, allows the formation of correctly charged Gln-tRNA(Gln) through the transamidation of misacylated Glu-tRNA(Gln) in organisms which lack glutaminyl-tRNA synthetase. The reaction takes place in the presence of glutamine and ATP through an activated gamma-phospho-Glu-tRNA(Gln). The sequence is that of Glutamyl-tRNA(Gln) amidotransferase subunit A from Paramagnetospirillum magneticum (strain ATCC 700264 / AMB-1) (Magnetospirillum magneticum).